Consider the following 1054-residue polypeptide: Calcium-transporting ATPase 2, endoplasmic reticulum-type (1054 aa).

The Cytoplasmic portion of the chain corresponds to 1–53 (MEEEKSFSAWSWSVEQCLKEYKTRLDKGLTSEDVQIRRQKYGFNELAKEKGKP). The helical transmembrane segment at 54-74 (LWHLVLEQFDDTLVKILLGAA) threads the bilayer. The Lumenal segment spans residues 75–98 (FISFVLAFLGEEHGSGSGFEAFVE). Residues 99–118 (PFVIVLILILNAVVGVWQES) traverse the membrane as a helical segment. The Cytoplasmic portion of the chain corresponds to 119 to 262 (NAEKALEALK…ESETPLKKKL (144 aa)). The chain crosses the membrane as a helical span at residues 263–282 (DEFGSRLTTAICIVCVLVWM). The Lumenal portion of the chain corresponds to 283–312 (INYKNFVSWDVVDGYKPVNIKFSFEKCTYY). The helical transmembrane segment at 313-330 (FKIAVALAVAAIPEGLPA) threads the bilayer. 4 residues coordinate Ca(2+): valine 321, alanine 322, isoleucine 324, and glutamate 326. The Cytoplasmic segment spans residues 331-782 (VITTCLALGT…AEGRSIYNNM (452 aa)). Aspartate 368 (4-aspartylphosphate intermediate) is an active-site residue. Residues aspartate 727 and aspartate 731 each contribute to the Mg(2+) site. Residues 783 to 802 (KAFIRYMISSNVGEVISIFL) form a helical membrane-spanning segment. Positions 793 and 796 each coordinate Ca(2+). The Lumenal portion of the chain corresponds to 803–812 (TAALGIPECM). Residues 813-833 (IPVQLLWVNLVTDGPPATALG) traverse the membrane as a helical segment. 3 residues coordinate Ca(2+): asparagine 821, threonine 824, and aspartate 825. Residues 834–853 (FNPADIDIMKKPPRKSDDCL) lie on the Cytoplasmic side of the membrane. The helical transmembrane segment at 854–876 (IDSWVLIRYLVIGSYVGVATVGI) threads the bilayer. The Lumenal portion of the chain corresponds to 877–949 (FVLWYTQASF…YFTLGKVKPM (73 aa)). A helical membrane pass occupies residues 950-969 (TLSLTVLVAIEMFNSLNALS). Glutamate 960 serves as a coordination point for Ca(2+). Over 970 to 982 (EDNSLLTMPPWRN) the chain is Cytoplasmic. The helical transmembrane segment at 983-1001 (PWLLVAMTVSFALHCVILY) threads the bilayer. The Lumenal portion of the chain corresponds to 1002-1016 (VPFLANVFGIVPLSF). The chain crosses the membrane as a helical span at residues 1017 to 1037 (REWFVVILVSFPVILIDEALK). Residues 1038-1054 (FIGRCRRTRIKKKIKTM) are Cytoplasmic-facing.

It belongs to the cation transport ATPase (P-type) (TC 3.A.3) family. Type IIA subfamily.

It is found in the membrane. The catalysed reaction is Ca(2+)(in) + ATP + H2O = Ca(2+)(out) + ADP + phosphate + H(+). Functionally, this magnesium-dependent enzyme catalyzes the hydrolysis of ATP coupled with the translocation of calcium from the cytosol to an endomembrane compartment. This Arabidopsis thaliana (Mouse-ear cress) protein is Calcium-transporting ATPase 2, endoplasmic reticulum-type (ECA2).